The following is a 646-amino-acid chain: Threonine--tRNA ligase (646 aa).

Residues methionine 1–lysine 61 enclose the TGS domain. The interval aspartate 242–proline 541 is catalytic. Positions 337, 388, and 518 each coordinate Zn(2+).

The protein belongs to the class-II aminoacyl-tRNA synthetase family. As to quaternary structure, homodimer. The cofactor is Zn(2+).

The protein resides in the cytoplasm. The catalysed reaction is tRNA(Thr) + L-threonine + ATP = L-threonyl-tRNA(Thr) + AMP + diphosphate + H(+). Catalyzes the attachment of threonine to tRNA(Thr) in a two-step reaction: L-threonine is first activated by ATP to form Thr-AMP and then transferred to the acceptor end of tRNA(Thr). Also edits incorrectly charged L-seryl-tRNA(Thr). In Phocaeicola vulgatus (strain ATCC 8482 / DSM 1447 / JCM 5826 / CCUG 4940 / NBRC 14291 / NCTC 11154) (Bacteroides vulgatus), this protein is Threonine--tRNA ligase.